A 561-amino-acid polypeptide reads, in one-letter code: Arf-GAP domain and FG repeat-containing protein 1 (561 aa).

Residues 11–135 form the Arf-GAP domain; sequence EKHLKMLRDM…WYVPPEQAKV (125 aa). Residues 29–52 form a C4-type zinc finger; that stretch reads CFDCDQRGPTYVNMTVGSFVCTSC. Ser-167 is subject to Phosphoserine. Residues 170 to 193 are disordered; it reads ALHLNKGTPSQSPVVGRSQGQQQE. Over residues 176-191 the composition is skewed to polar residues; the sequence is GTPSQSPVVGRSQGQQ. A Phosphothreonine modification is found at Thr-177. 2 positions are modified to phosphoserine: Ser-181 and Ser-362. The O-linked (GlcNAc) serine glycan is linked to Ser-367. The segment at 413-433 is disordered; the sequence is SAQTQPASSGPAPFGATPSTN.

Interacts with FCHO1. Interacts with EPS15R and EPS15. O-glycosylated. As to expression, expressed in the testes (at protein level).

It is found in the nucleus. Its subcellular location is the cytoplasmic vesicle. Required for vesicle docking or fusion during acrosome biogenesis. May play a role in RNA trafficking or localization. The protein is Arf-GAP domain and FG repeat-containing protein 1 (Agfg1) of Mus musculus (Mouse).